The chain runs to 377 residues: Protein RecA (377 aa).

76-83 (GPESSGKT) contributes to the ATP binding site. The disordered stretch occupies residues 346–377 (TNGNNGEDHEGTEPVEIEAEDAAPKKGKKGKH).

The protein belongs to the RecA family.

Its subcellular location is the cytoplasm. Can catalyze the hydrolysis of ATP in the presence of single-stranded DNA, the ATP-dependent uptake of single-stranded DNA by duplex DNA, and the ATP-dependent hybridization of homologous single-stranded DNAs. It interacts with LexA causing its activation and leading to its autocatalytic cleavage. This Bdellovibrio bacteriovorus (strain ATCC 15356 / DSM 50701 / NCIMB 9529 / HD100) protein is Protein RecA.